We begin with the raw amino-acid sequence, 71 residues long: MPIIKVRENEPFDVALRRFKRSCEKAGILAEVRRRESYEKPTTERKRARASAIKRHAKKLARENARRTRLY.

The interval Tyr-38–Tyr-71 is disordered. Over residues Lys-46–Lys-59 the composition is skewed to basic residues. Over residues Leu-60 to Tyr-71 the composition is skewed to basic and acidic residues.

This sequence belongs to the bacterial ribosomal protein bS21 family.

The sequence is that of Small ribosomal subunit protein bS21 from Hamiltonella defensa subsp. Acyrthosiphon pisum (strain 5AT).